Consider the following 2177-residue polypeptide: Protein sidekick-2 (2177 aa).

An N-terminal signal peptide occupies residues M1–A26. The Extracellular portion of the chain corresponds to D27–F1937. Ig-like C2-type domains follow at residues P31 to Q113, G118 to T205, P220 to P299, P313 to A401, P407 to V496, and T501 to R590. Cysteines 53 and 96 form a disulfide. 2 N-linked (GlcNAc...) asparagine glycosylation sites follow: N198 and N228. 2 disulfides stabilise this stretch: C242–C289 and C335–C385. A glycan (N-linked (GlcNAc...) asparagine) is linked at N408. Intrachain disulfides connect C428–C480 and C522–C574. N582, N614, N709, N748, N809, N941, and N953 each carry an N-linked (GlcNAc...) asparagine glycan. Fibronectin type-III domains follow at residues A597–E693, P698–G794, P799–D898, P902–E996, A1000–A1099, A1104–S1202, G1207–D1304, V1305–R1402, P1407–A1504, A1509–A1626, A1631–A1727, A1731–G1826, and A1829–A1928. N-linked (GlcNAc...) asparagine glycans are attached at residues N1107, N1210, N1261, N1346, N1462, N1580, N1593, N1675, N1694, N1746, and N1820. Residues L1938 to I1958 traverse the membrane as a helical segment. Over R1959 to V2177 the chain is Cytoplasmic. Disordered stretches follow at residues A2044–A2071 and Q2103–V2177. 2 stretches are compositionally biased toward polar residues: residues E2045–D2063 and P2119–S2130. The segment covering P2142–Q2151 has biased composition (pro residues). The PDZ-binding motif lies at G2171–V2177.

The protein belongs to the sidekick family. Homodimer; mediates homophilic interactions to promote cell adhesion. As to expression, expressed by non-overlapping subsets of retinal neurons. SDK1, SDK2, DSCAM and DSCAML1 are expressed in non-overlapping subsets of interneurons and retinal ganglion cells (RGCs) that form synapses in distinct inner plexiform layer (IPL) sublaminae.

Its subcellular location is the cell membrane. It is found in the synapse. In terms of biological role, adhesion molecule that promotes lamina-specific synaptic connections in the retina. Expressed in specific subsets of interneurons and retinal ganglion cells (RGCs) and promotes synaptic connectivity via homophilic interactions. The chain is Protein sidekick-2 from Gallus gallus (Chicken).